A 230-amino-acid chain; its full sequence is Large ribosomal subunit protein uL4 (230 aa).

A disordered region spans residues 59-113; that stretch reads RQGTHATKTRGEVSGGGKKPYRQKGTGRARQGSTRAPQFTGGGTVHGPQPRDYSQ.

This sequence belongs to the universal ribosomal protein uL4 family. As to quaternary structure, part of the 50S ribosomal subunit.

Its function is as follows. One of the primary rRNA binding proteins, this protein initially binds near the 5'-end of the 23S rRNA. It is important during the early stages of 50S assembly. It makes multiple contacts with different domains of the 23S rRNA in the assembled 50S subunit and ribosome. In terms of biological role, forms part of the polypeptide exit tunnel. The protein is Large ribosomal subunit protein uL4 of Nocardia farcinica (strain IFM 10152).